Consider the following 313-residue polypeptide: Ribonuclease Z (313 aa).

Positions 62, 64, 66, 67, 142, 212, and 270 each coordinate Zn(2+). Aspartate 66 serves as the catalytic Proton acceptor.

The protein belongs to the RNase Z family. As to quaternary structure, homodimer. The cofactor is Zn(2+).

It carries out the reaction Endonucleolytic cleavage of RNA, removing extra 3' nucleotides from tRNA precursor, generating 3' termini of tRNAs. A 3'-hydroxy group is left at the tRNA terminus and a 5'-phosphoryl group is left at the trailer molecule.. Its function is as follows. Zinc phosphodiesterase, which displays some tRNA 3'-processing endonuclease activity. Probably involved in tRNA maturation, by removing a 3'-trailer from precursor tRNA. This chain is Ribonuclease Z, found in Cytophaga hutchinsonii (strain ATCC 33406 / DSM 1761 / CIP 103989 / NBRC 15051 / NCIMB 9469 / D465).